The primary structure comprises 463 residues: UDP-N-acetylmuramoylalanine--D-glutamate ligase (463 aa).

An ATP-binding site is contributed by 121-127 (GTNGKST).

This sequence belongs to the MurCDEF family.

The protein resides in the cytoplasm. The catalysed reaction is UDP-N-acetyl-alpha-D-muramoyl-L-alanine + D-glutamate + ATP = UDP-N-acetyl-alpha-D-muramoyl-L-alanyl-D-glutamate + ADP + phosphate + H(+). It functions in the pathway cell wall biogenesis; peptidoglycan biosynthesis. Cell wall formation. Catalyzes the addition of glutamate to the nucleotide precursor UDP-N-acetylmuramoyl-L-alanine (UMA). This Rhizobium meliloti (strain 1021) (Ensifer meliloti) protein is UDP-N-acetylmuramoylalanine--D-glutamate ligase (murD).